The following is a 121-amino-acid chain: Phosphoribosyl-ATP pyrophosphatase (121 aa).

Belongs to the PRA-PH family.

It localises to the cytoplasm. It catalyses the reaction 1-(5-phospho-beta-D-ribosyl)-ATP + H2O = 1-(5-phospho-beta-D-ribosyl)-5'-AMP + diphosphate + H(+). The protein operates within amino-acid biosynthesis; L-histidine biosynthesis; L-histidine from 5-phospho-alpha-D-ribose 1-diphosphate: step 2/9. This Nitrosospira multiformis (strain ATCC 25196 / NCIMB 11849 / C 71) protein is Phosphoribosyl-ATP pyrophosphatase.